A 632-amino-acid chain; its full sequence is 1-deoxy-D-xylulose-5-phosphate synthase (632 aa).

Thiamine diphosphate contacts are provided by residues His-78 and 119 to 121 (AHS). Asp-150 is a binding site for Mg(2+). Residues 151 to 152 (GA), Asn-179, Tyr-286, and Glu-368 contribute to the thiamine diphosphate site. Asn-179 contributes to the Mg(2+) binding site.

It belongs to the transketolase family. DXPS subfamily. Homodimer. Requires Mg(2+) as cofactor. Thiamine diphosphate is required as a cofactor.

It carries out the reaction D-glyceraldehyde 3-phosphate + pyruvate + H(+) = 1-deoxy-D-xylulose 5-phosphate + CO2. The protein operates within metabolic intermediate biosynthesis; 1-deoxy-D-xylulose 5-phosphate biosynthesis; 1-deoxy-D-xylulose 5-phosphate from D-glyceraldehyde 3-phosphate and pyruvate: step 1/1. In terms of biological role, catalyzes the acyloin condensation reaction between C atoms 2 and 3 of pyruvate and glyceraldehyde 3-phosphate to yield 1-deoxy-D-xylulose-5-phosphate (DXP). The protein is 1-deoxy-D-xylulose-5-phosphate synthase of Albidiferax ferrireducens (strain ATCC BAA-621 / DSM 15236 / T118) (Rhodoferax ferrireducens).